The primary structure comprises 177 residues: Dual-action ribosomal maturation protein DarP (177 aa).

Residues 1 to 26 (MKIVGDSEHFKQPYDSDEEYVSKTED) are disordered.

The protein belongs to the DarP family.

It localises to the cytoplasm. Functionally, member of a network of 50S ribosomal subunit biogenesis factors which assembles along the 30S-50S interface, preventing incorrect 23S rRNA structures from forming. Promotes peptidyl transferase center (PTC) maturation. In Shewanella sp. (strain MR-4), this protein is Dual-action ribosomal maturation protein DarP.